A 123-amino-acid polypeptide reads, in one-letter code: Large ribosomal subunit protein bL12 (123 aa).

Belongs to the bacterial ribosomal protein bL12 family. Homodimer. Part of the ribosomal stalk of the 50S ribosomal subunit. Forms a multimeric L10(L12)X complex, where L10 forms an elongated spine to which 2 to 4 L12 dimers bind in a sequential fashion. Binds GTP-bound translation factors.

Functionally, forms part of the ribosomal stalk which helps the ribosome interact with GTP-bound translation factors. Is thus essential for accurate translation. The polypeptide is Large ribosomal subunit protein bL12 (Geobacillus kaustophilus (strain HTA426)).